The following is a 662-amino-acid chain: Protein associated with UVRAG as autophagy enhancer (662 aa).

Disordered regions lie at residues 1–34 (MVSQSTVRQDSPVEPWEGISDHSGIIDGSPRLLN) and 58–131 (DVQQ…SLSS). A compositionally biased stretch (low complexity) spans 58 to 71 (DVQQQPQDLQSQVP). Polar residues predominate over residues 100-113 (AETTLSEDTTDSVG). Positions 114 to 131 (SASPHGSSEKSSSFSLSS) are enriched in low complexity. At serine 157 the chain carries Phosphoserine; by MTOR. The tract at residues 196–235 (EVFVLPVDVEKENAHFYVADMIISAMEKMKCNILSQQQTE) is interaction with UVRAG. Lysine 483, lysine 523, lysine 533, lysine 573, and lysine 633 each carry N6-acetyllysine.

In terms of assembly, interacts with UVRAG; the interaction is direct and promotes association with the PI3K/PI3KC3 and HOPS complexes. Interacts with STX17. Phosphorylated by MTOR at Ser-157 under nutrient-rich conditions. Phosphorylation prevents acetylation by KAT5/TIP60 and impairs RUBCNL/PACER function and autophagosome maturation. Under autophagy induction, Phosphorylation by MTOR is repressed, enabling acetylation by KAT5/TIP60. In terms of processing, acetylated by KAT5/TIP60 under autophagy induction, promoting autophagosome maturation and lipid metabolism. Acetylation is prevented by phosphorylation by MTOR. Lys-483 and Lys-573 constitute the key sites for tuning function in autophagy. Expressed weakly in cervical carcinoma cell lines.

The protein localises to the cytoplasmic vesicle. It localises to the autophagosome membrane. Regulator of autophagy that promotes autophagosome maturation by facilitating the biogenesis of phosphatidylinositol 3-phosphate (PtdIns(3)P) in late steps of autophagy. Acts by antagonizing RUBCN, thereby stimulating phosphatidylinositol 3-kinase activity of the PI3K/PI3KC3 complex. Following anchorage to the autophagosomal SNARE STX17, promotes the recruitment of PI3K/PI3KC3 and HOPS complexes to the autophagosome to regulate the fusion specificity of autophagosomes with late endosomes/lysosomes. Binds phosphoinositides phosphatidylinositol 3-phosphate (PtdIns(3)P), 4-phosphate (PtdIns(4)P) and 5-phosphate (PtdIns(5)P). In addition to its role in autophagy, acts as a regulator of lipid and glycogen homeostasis. May act as a tumor suppressor. This chain is Protein associated with UVRAG as autophagy enhancer, found in Homo sapiens (Human).